The chain runs to 556 residues: Dihydroxy-acid dehydratase (556 aa).

Residue Cys-47 participates in [2Fe-2S] cluster binding. Asp-79 contributes to the Mg(2+) binding site. Cys-120 lines the [2Fe-2S] cluster pocket. 2 residues coordinate Mg(2+): Asp-121 and Lys-122. Lys-122 carries the post-translational modification N6-carboxylysine. Cys-192 lines the [2Fe-2S] cluster pocket. Mg(2+) is bound at residue Glu-444. Ser-470 functions as the Proton acceptor in the catalytic mechanism.

This sequence belongs to the IlvD/Edd family. As to quaternary structure, homodimer. Requires [2Fe-2S] cluster as cofactor. The cofactor is Mg(2+).

The catalysed reaction is (2R)-2,3-dihydroxy-3-methylbutanoate = 3-methyl-2-oxobutanoate + H2O. The enzyme catalyses (2R,3R)-2,3-dihydroxy-3-methylpentanoate = (S)-3-methyl-2-oxopentanoate + H2O. The protein operates within amino-acid biosynthesis; L-isoleucine biosynthesis; L-isoleucine from 2-oxobutanoate: step 3/4. It participates in amino-acid biosynthesis; L-valine biosynthesis; L-valine from pyruvate: step 3/4. Functionally, functions in the biosynthesis of branched-chain amino acids. Catalyzes the dehydration of (2R,3R)-2,3-dihydroxy-3-methylpentanoate (2,3-dihydroxy-3-methylvalerate) into 2-oxo-3-methylpentanoate (2-oxo-3-methylvalerate) and of (2R)-2,3-dihydroxy-3-methylbutanoate (2,3-dihydroxyisovalerate) into 2-oxo-3-methylbutanoate (2-oxoisovalerate), the penultimate precursor to L-isoleucine and L-valine, respectively. The sequence is that of Dihydroxy-acid dehydratase from Prochlorococcus marinus (strain MIT 9313).